A 728-amino-acid polypeptide reads, in one-letter code: Cytosolic endo-beta-N-acetylglucosaminidase (728 aa).

In terms of domain architecture, BRCT spans 287–381 (QNRVFFDACD…NFLLNEDKFW (95 aa)).

The protein belongs to the glycosyl hydrolase 85 family.

Its subcellular location is the cytoplasm. The protein resides in the cytosol. It catalyses the reaction an N(4)-(oligosaccharide-(1-&gt;3)-[oligosaccharide-(1-&gt;6)]-beta-D-Man-(1-&gt;4)-beta-D-GlcNAc-(1-&gt;4)-alpha-D-GlcNAc)-L-asparaginyl-[protein] + H2O = an oligosaccharide-(1-&gt;3)-[oligosaccharide-(1-&gt;6)]-beta-D-Man-(1-&gt;4)-D-GlcNAc + N(4)-(N-acetyl-beta-D-glucosaminyl)-L-asparaginyl-[protein]. Functionally, endoglycosidase that releases N-glycans from glycoproteins by cleaving the beta-1,4-glycosidic bond in the N,N'-diacetylchitobiose core. Involved in the processing of free oligosaccharides in the cytosol. The sequence is that of Cytosolic endo-beta-N-acetylglucosaminidase (ENGASE) from Gallus gallus (Chicken).